Here is a 259-residue protein sequence, read N- to C-terminus: Type III pantothenate kinase (259 aa).

Asp6–Val13 lines the ATP pocket. Substrate is bound at residue Gly107–Arg110. Catalysis depends on Asp109, which acts as the Proton acceptor. Asp129 is a binding site for K(+). Position 132 (Thr132) interacts with ATP. Substrate is bound at residue Thr184.

Belongs to the type III pantothenate kinase family. Homodimer. NH4(+) serves as cofactor. It depends on K(+) as a cofactor.

The protein localises to the cytoplasm. The catalysed reaction is (R)-pantothenate + ATP = (R)-4'-phosphopantothenate + ADP + H(+). It participates in cofactor biosynthesis; coenzyme A biosynthesis; CoA from (R)-pantothenate: step 1/5. In terms of biological role, catalyzes the phosphorylation of pantothenate (Pan), the first step in CoA biosynthesis. This is Type III pantothenate kinase from Ruegeria pomeroyi (strain ATCC 700808 / DSM 15171 / DSS-3) (Silicibacter pomeroyi).